We begin with the raw amino-acid sequence, 508 residues long: MVLLSELAAATLIFLTTHIFISTLLSITNGRRLPPGPRGWPVIGALPLLGAMPHVSLAKMAKKYGAIMYLKVGTCGMVVASTPDAAKAFLKTLDLNFSNRPPNAGATHLAYGAQDMVFAHYGPRWKLLRKLSNLHMLGGKALENWANVRANELGHMLKSMFDMSREGERVVVAEMLTFAMANMIGQVILSKRVFVNKGVEVNEFKDMVVELMTTAGYFNIGDFIPCLAWMDLQGIEKGMKRLHKKFDALLTKMFDEHKATSYERKGKPDFLDCVMENRDNSEGERLSTTNIKALLLNLFTAGTDTSSSAIEWALAEMMKNPAILKKAQGEMDQVIGNNRRLLESDIPNLPYLRAICKETFRKHPSTPLNLPRISNEPCIVDGYYIPKNTRLSVNIWAIGRDPEVWENPLEFYPERFLSGRNSKIDPRGNDFELIPFGAGRRICAGTRMGIVMVEYILGTLVHSFDWKLPSEVIELNMEEAFGLALQKAVPLEAMVTPRLPIDVYAPLA.

Residue Cys-443 participates in heme binding.

This sequence belongs to the cytochrome P450 family. The cofactor is heme. As to expression, flowers.

The protein resides in the microsome. It localises to the endoplasmic reticulum. It catalyses the reaction a 3',5'-unsubstituted flavanone + 2 reduced [NADPH--hemoprotein reductase] + 2 O2 = a 3',5'-dihydroxyflavanone + 2 oxidized [NADPH--hemoprotein reductase] + 2 H2O + 2 H(+). The protein operates within pigment biosynthesis; anthocyanin biosynthesis. In terms of biological role, catalyzes the 3'5'-hydroxylation of naringenin and eriodictyol to form 5,7,3,'4',5'-pentahydroxyflavanone and 3',5'-hydroxylation of dihydrokaempferol and dihydroquercetin to form dihydromyricetin. This is Flavonoid 3',5'-hydroxylase 2 (CYP75A3) from Petunia hybrida (Petunia).